The sequence spans 371 residues: DNA replication and repair protein RecF (371 aa).

30–37 is a binding site for ATP; the sequence is GANAQGKT.

Belongs to the RecF family.

It localises to the cytoplasm. In terms of biological role, the RecF protein is involved in DNA metabolism; it is required for DNA replication and normal SOS inducibility. RecF binds preferentially to single-stranded, linear DNA. It also seems to bind ATP. The sequence is that of DNA replication and repair protein RecF from Lacticaseibacillus casei (strain BL23) (Lactobacillus casei).